The sequence spans 330 residues: Ferredoxin--NADP reductase (330 aa).

Residues E35, Q43, Y48, V90, F123, D285, and T326 each coordinate FAD.

It belongs to the ferredoxin--NADP reductase type 2 family. As to quaternary structure, homodimer. It depends on FAD as a cofactor.

The catalysed reaction is 2 reduced [2Fe-2S]-[ferredoxin] + NADP(+) + H(+) = 2 oxidized [2Fe-2S]-[ferredoxin] + NADPH. The chain is Ferredoxin--NADP reductase from Streptococcus pyogenes serotype M2 (strain MGAS10270).